Here is a 556-residue protein sequence, read N- to C-terminus: MSVSAFNRRWAAVILEALTRHGVRHICIAPGSRSTPLTLAAAENSAFIHHTHFDERGLGHLALGLAKVSKQPVAVIVTSGTAVANLYPALIEAGLTGEKLILLTADRPPELIDCGANQAIRQPGMFASHPTHSISLPRPTQDIPARWLVSTIDHALGTLHAGGVHINCPFAEPLYGEMDDTGLSWQQRLGDWWQDDKPWLREAPSLESEKQRDWFFWRQKRGVVVAGRMSAEEGKKVALWAQTLGWPLIGDVLSQTGQPLPCADLWLGNAKATSELQQAQIVVQLGSSLTGKRLLQWQASCEPEEYWIVDDIEGRLDPAHHRGRRLIANIADWLELHPAEKRQPWCVEIPRLAEQAMQAVIARRDAFGEAQLAHRISDYLPEQGQLFVGNSLVVRLIDALSQLPAGYPVYSNRGASGIDGLLSTAAGVQRASGKPTLAIVGDLSALYDLNALALLRQVSAPLVLIVVNNNGGQIFSLLPTPQSERERFYLMPQNVHFEHAAAMFELKYHRPQNWQELETAFADAWRTPTTTVIEMVVNDTDGAQTLQQLQAQVSHL.

It belongs to the TPP enzyme family. MenD subfamily. Homodimer. Mg(2+) is required as a cofactor. The cofactor is Mn(2+). Requires thiamine diphosphate as cofactor.

The catalysed reaction is isochorismate + 2-oxoglutarate + H(+) = 5-enolpyruvoyl-6-hydroxy-2-succinyl-cyclohex-3-ene-1-carboxylate + CO2. Its pathway is quinol/quinone metabolism; 1,4-dihydroxy-2-naphthoate biosynthesis; 1,4-dihydroxy-2-naphthoate from chorismate: step 2/7. The protein operates within quinol/quinone metabolism; menaquinone biosynthesis. In terms of biological role, catalyzes the thiamine diphosphate-dependent decarboxylation of 2-oxoglutarate and the subsequent addition of the resulting succinic semialdehyde-thiamine pyrophosphate anion to isochorismate to yield 2-succinyl-5-enolpyruvyl-6-hydroxy-3-cyclohexene-1-carboxylate (SEPHCHC). The polypeptide is 2-succinyl-5-enolpyruvyl-6-hydroxy-3-cyclohexene-1-carboxylate synthase (Shigella boydii serotype 18 (strain CDC 3083-94 / BS512)).